Consider the following 196-residue polypeptide: Peptidyl-tRNA hydrolase (196 aa).

Tyrosine 17 lines the tRNA pocket. Histidine 22 serves as the catalytic Proton acceptor. TRNA contacts are provided by phenylalanine 68, asparagine 70, and asparagine 116.

It belongs to the PTH family. Monomer.

The protein resides in the cytoplasm. The catalysed reaction is an N-acyl-L-alpha-aminoacyl-tRNA + H2O = an N-acyl-L-amino acid + a tRNA + H(+). Hydrolyzes ribosome-free peptidyl-tRNAs (with 1 or more amino acids incorporated), which drop off the ribosome during protein synthesis, or as a result of ribosome stalling. Its function is as follows. Catalyzes the release of premature peptidyl moieties from peptidyl-tRNA molecules trapped in stalled 50S ribosomal subunits, and thus maintains levels of free tRNAs and 50S ribosomes. This is Peptidyl-tRNA hydrolase from Serratia proteamaculans (strain 568).